The following is a 20-amino-acid chain: Brevinin-1ITa (20 aa).

Residue M8 is modified to Methionine sulfoxide; partial. C14 and C20 are disulfide-bonded.

This sequence belongs to the frog skin active peptide (FSAP) family. Brevinin subfamily. As to expression, expressed by the skin glands.

Its subcellular location is the secreted. Antimicrobial peptide active against Gram-positive bacterium S.epidermidis ATCC 12228 (MIC=4 uM), against Gram-negative bacterium E.coli ATCC 25922 (MIC=64 uM) and against yeast C.parapsilosis ATCC 22019 (MIC=16 uM). Has hemolytic and cytotoxic activity. This chain is Brevinin-1ITa, found in Rana italica (Italian stream frog).